A 77-amino-acid polypeptide reads, in one-letter code: Chassatide C13 (77 aa).

The signal sequence occupies residues Met1–Ala24. Residues Ser25–Asn44 constitute a propeptide, removed in mature form. A cross-link (cyclopeptide (Gly-Asn)) is located at residues Gly45–Asn75. Disulfide bonds link Cys48-Cys65, Cys52-Cys67, and Cys57-Cys72. A propeptide spans Glu76–Leu77 (removed in mature form).

In terms of processing, this is a cyclic peptide. Expressed in fruit and pedicel but not in root, leaf and stem (at protein level).

Functionally, probably participates in a plant defense mechanism. This chain is Chassatide C13, found in Chassalia chartacea (Chassalia curviflora).